Here is a 242-residue protein sequence, read N- to C-terminus: Uridylate kinase (242 aa).

An ATP-binding site is contributed by 11–14 (KLSG). Residues 19 to 24 (GNMGYG) form an involved in allosteric activation by GTP region. Gly-53 serves as a coordination point for UMP. The ATP site is built by Gly-54 and Arg-58. Residues Asp-73 and 134-141 (SGNPFFTT) each bind UMP. ATP is bound by residues Thr-161, Tyr-167, and Asp-170.

Belongs to the UMP kinase family. In terms of assembly, homohexamer.

Its subcellular location is the cytoplasm. The enzyme catalyses UMP + ATP = UDP + ADP. The protein operates within pyrimidine metabolism; CTP biosynthesis via de novo pathway; UDP from UMP (UMPK route): step 1/1. Its activity is regulated as follows. Allosterically activated by GTP. Inhibited by UTP. Functionally, catalyzes the reversible phosphorylation of UMP to UDP. In Trichormus variabilis (strain ATCC 29413 / PCC 7937) (Anabaena variabilis), this protein is Uridylate kinase.